A 362-amino-acid chain; its full sequence is Putative integrase ORF3 (362 aa).

Residues 179 to 359 enclose the Integrase catalytic domain; that stretch reads YEVKEIGLLQ…TPFNFLNSLS (181 aa). Asp190 and Asp256 together coordinate Mg(2+).

Belongs to the plectrovirus integrase ORF3 family.

This protein may encode an integrase, which is necessary for integration of the viral DNA into host genome. The protein is Putative integrase ORF3 of Spiroplasma melliferum (SpV1).